We begin with the raw amino-acid sequence, 340 residues long: Sodium/bile acid cotransporter 7 (340 aa).

At M1–E10 the chain is on the cytoplasmic side. A helical membrane pass occupies residues W11–V31. The Extracellular segment spans residues N32–K37. A helical transmembrane segment spans residues P38–L58. The Cytoplasmic segment spans residues K59–R71. Residues L72–L92 traverse the membrane as a helical segment. The Extracellular portion of the chain corresponds to Q93–P116. Residues P117 to F137 form a helical membrane-spanning segment. Residue N138 is a topological domain, cytoplasmic. A helical transmembrane segment spans residues S139 to G159. Residues S160–S163 lie on the Extracellular side of the membrane. A helical transmembrane segment spans residues V164 to G184. Residues Q185 to P201 lie on the Cytoplasmic side of the membrane. Residues F202–F222 traverse the membrane as a helical segment. At S223–L234 the chain is on the extracellular side. A helical membrane pass occupies residues I235 to F255. The Cytoplasmic segment spans residues S256–A270. The helical transmembrane segment at I271 to F291 threads the bilayer. Residues A292–S298 lie on the Extracellular side of the membrane. A helical transmembrane segment spans residues L299–V319. Residues P320 to V340 lie on the Cytoplasmic side of the membrane.

Belongs to the bile acid:sodium symporter (BASS) (TC 2.A.28) family. As to expression, expressed in heart, brain, colon, lung, liver, adrenal gland, stomach and ovary. Also expressed weakly in small intestine. Expressed in skeletal tissues.

The protein resides in the cell membrane. It is found in the endoplasmic reticulum membrane. Its subcellular location is the golgi apparatus membrane. Involved in teeth and skeletal development. Has an essential role in the biosynthesis and trafficking of glycosaminoglycans and glycoproteins to produce a proper functioning extracellular matrix. Required for extracellular matrix mineralization. Also involved in the regulation of cellular calcium homeostasis. Does not show transport activity towards bile acids or steroid sulfates (including taurocholate, cholate, chenodeoxycholate, estrone-3-sulfate, dehydroepiandrosterone sulfate (DHEAS) and pregnenolone sulfate). This Mus musculus (Mouse) protein is Sodium/bile acid cotransporter 7 (Slc10a7).